A 430-amino-acid polypeptide reads, in one-letter code: Maltoporin (430 aa).

An N-terminal signal peptide occupies residues 1 to 23 (MNNKKTLLAVAISGMMFATSAAA).

The protein belongs to the porin LamB (TC 1.B.3) family. Homotrimer formed of three 18-stranded antiparallel beta-barrels, containing three independent channels.

It localises to the cell outer membrane. The enzyme catalyses beta-maltose(in) = beta-maltose(out). Its function is as follows. Involved in the transport of maltose and maltodextrins. The sequence is that of Maltoporin from Actinobacillus succinogenes (strain ATCC 55618 / DSM 22257 / CCUG 43843 / 130Z).